The chain runs to 374 residues: F-box/LRR-repeat protein 8 (374 aa).

The region spanning 2 to 48 (AEPGEGLPEEVLALIFRHLSLRDRAAAARVCRAWAAAATCSAVWHDT) is the F-box domain.

In terms of assembly, directly interacts with SKP1 and CUL1.

Functionally, substrate-recognition component of the SCF (SKP1-CUL1-F-box protein)-type E3 ubiquitin ligase complex. The sequence is that of F-box/LRR-repeat protein 8 (FBXL8) from Homo sapiens (Human).